The sequence spans 361 residues: Chorismate synthase (361 aa).

2 residues coordinate NADP(+): R48 and R54. FMN-binding positions include 125 to 127, 238 to 239, G278, 293 to 297, and R319; these read RSS, NA, and KPTSS.

The protein belongs to the chorismate synthase family. As to quaternary structure, homotetramer. FMNH2 is required as a cofactor.

The enzyme catalyses 5-O-(1-carboxyvinyl)-3-phosphoshikimate = chorismate + phosphate. Its pathway is metabolic intermediate biosynthesis; chorismate biosynthesis; chorismate from D-erythrose 4-phosphate and phosphoenolpyruvate: step 7/7. Its function is as follows. Catalyzes the anti-1,4-elimination of the C-3 phosphate and the C-6 proR hydrogen from 5-enolpyruvylshikimate-3-phosphate (EPSP) to yield chorismate, which is the branch point compound that serves as the starting substrate for the three terminal pathways of aromatic amino acid biosynthesis. This reaction introduces a second double bond into the aromatic ring system. The polypeptide is Chorismate synthase (Enterobacter sp. (strain 638)).